The chain runs to 460 residues: CWF19-like protein 2 homolog (460 aa).

3 disordered regions span residues 38–78 (GKTF…EDEK), 103–175 (KLES…TGTA), and 193–227 (RRHD…ESIK). Over residues 54–68 (GSQQVRNDVMKSSDS) the composition is skewed to polar residues. A coiled-coil region spans residues 84-106 (KILKAEMKGDTDLVKKLKRKLES). Basic and acidic residues-rich tracts occupy residues 113–131 (EPPK…DREG), 139–172 (RRSD…EEKT), and 205–227 (EMQK…ESIK). The stretch at 210-231 (KKKSDEKDKKRKEKESIKEHKR) forms a coiled coil.

This sequence belongs to the CWF19 family.

The chain is CWF19-like protein 2 homolog from Caenorhabditis elegans.